The chain runs to 141 residues: MAVERTLSIIKPDAVAKNVIGQIYARFEAAGLKVVAARMAHLSRVEAENFYAIHRERPFFKDLVEFMISGPVMIQVLEGENAIARNRELMGATDPRKAEKGTIRADFAESIDANAVHGSDAPETAVVEIACFFPSLEIHSR.

ATP contacts are provided by lysine 11, phenylalanine 59, arginine 87, threonine 93, arginine 104, and asparagine 114. The active-site Pros-phosphohistidine intermediate is histidine 117.

This sequence belongs to the NDK family. Homotetramer. Mg(2+) serves as cofactor.

The protein localises to the cytoplasm. The enzyme catalyses a 2'-deoxyribonucleoside 5'-diphosphate + ATP = a 2'-deoxyribonucleoside 5'-triphosphate + ADP. It catalyses the reaction a ribonucleoside 5'-diphosphate + ATP = a ribonucleoside 5'-triphosphate + ADP. Major role in the synthesis of nucleoside triphosphates other than ATP. The ATP gamma phosphate is transferred to the NDP beta phosphate via a ping-pong mechanism, using a phosphorylated active-site intermediate. This chain is Nucleoside diphosphate kinase, found in Nitrosomonas europaea (strain ATCC 19718 / CIP 103999 / KCTC 2705 / NBRC 14298).